The sequence spans 715 residues: Fatty acid oxidation complex subunit alpha (715 aa).

Residues 1–190 (MTTTSAFMLS…KAGLVDDVVP (190 aa)) are enoyl-CoA hydratase. A 3-hydroxyacyl-CoA dehydrogenase region spans residues 306–714 (GPLNSVGILG…FWTNGETDQG (409 aa)).

It in the N-terminal section; belongs to the enoyl-CoA hydratase/isomerase family. This sequence in the central section; belongs to the 3-hydroxyacyl-CoA dehydrogenase family. Heterotetramer of two alpha chains (FadJ) and two beta chains (FadI).

It localises to the cytoplasm. It carries out the reaction a (3S)-3-hydroxyacyl-CoA = a (2E)-enoyl-CoA + H2O. It catalyses the reaction a 4-saturated-(3S)-3-hydroxyacyl-CoA = a (3E)-enoyl-CoA + H2O. The catalysed reaction is a (3S)-3-hydroxyacyl-CoA + NAD(+) = a 3-oxoacyl-CoA + NADH + H(+). The enzyme catalyses (3S)-3-hydroxybutanoyl-CoA = (3R)-3-hydroxybutanoyl-CoA. It participates in lipid metabolism; fatty acid beta-oxidation. Functionally, catalyzes the formation of a hydroxyacyl-CoA by addition of water on enoyl-CoA. Also exhibits 3-hydroxyacyl-CoA epimerase and 3-hydroxyacyl-CoA dehydrogenase activities. The polypeptide is Fatty acid oxidation complex subunit alpha (Salmonella typhi).